The sequence spans 163 residues: Nucleotide-binding protein DvMF_3058 (163 aa).

The protein belongs to the YajQ family.

Nucleotide-binding protein. The polypeptide is Nucleotide-binding protein DvMF_3058 (Nitratidesulfovibrio vulgaris (strain DSM 19637 / Miyazaki F) (Desulfovibrio vulgaris)).